The chain runs to 206 residues: Amelogenin, Y isoform (206 aa).

An N-terminal signal peptide occupies residues 1–16 (MGTWILFACLVGAAFA). The interval 118-180 (VPGQQSMTPT…PPLPPMFPLR (63 aa)) is disordered. The span at 128–142 (QHHQPNLPLPAQQPF) shows a compositional bias: low complexity. Pro residues predominate over residues 143 to 180 (QPQPVQPQPHQPMQPQPPVQPMQPLLPQPPLPPMFPLR).

This sequence belongs to the amelogenin family.

The protein resides in the secreted. It localises to the extracellular space. The protein localises to the extracellular matrix. Plays a role in biomineralization. Seems to regulate the formation of crystallites during the secretory stage of tooth enamel development. Thought to play a major role in the structural organization and mineralization of developing enamel. This chain is Amelogenin, Y isoform (AMELY), found in Homo sapiens (Human).